We begin with the raw amino-acid sequence, 1755 residues long: E3 ubiquitin-protein ligase UBR2 (1755 aa).

Alanine 2 is modified (N-acetylalanine). Lysine 94 participates in a covalent cross-link: Glycyl lysine isopeptide (Lys-Gly) (interchain with G-Cter in ubiquitin). The UBR-type zinc finger occupies histidine 97 to leucine 168. Residues cysteine 99, cysteine 112, cysteine 115, cysteine 124, cysteine 127, histidine 133, and histidine 136 each coordinate Zn(2+). Phenylalanine 148 lines the a peptide pocket. Residue cysteine 149 participates in Zn(2+) binding. Residue aspartate 150 coordinates a peptide. Position 151 (cysteine 151) interacts with Zn(2+). Aspartate 153 provides a ligand contact to a peptide. Residue lysine 158 forms a Glycyl lysine isopeptide (Lys-Gly) (interchain with G-Cter in ubiquitin) linkage. Cysteine 163 provides a ligand contact to Zn(2+). Lysine 165 participates in a covalent cross-link: Glycyl lysine isopeptide (Lys-Gly) (interchain with G-Cter in ubiquitin). Position 166 (histidine 166) interacts with Zn(2+). Residues lysine 248, lysine 255, and lysine 470 each participate in a glycyl lysine isopeptide (Lys-Gly) (interchain with G-Cter in ubiquitin) cross-link. Serine 476 carries the phosphoserine modification. Residues lysine 488, lysine 568, lysine 779, and lysine 789 each participate in a glycyl lysine isopeptide (Lys-Gly) (interchain with G-Cter in ubiquitin) cross-link. Residues alanine 1012–arginine 1033 form a disordered region. Positions methionine 1019–arginine 1054 form a coiled coil. The span at glutamate 1021–arginine 1033 shows a compositional bias: basic and acidic residues. Residues cysteine 1108, cysteine 1111, cysteine 1168, histidine 1170, histidine 1173, cysteine 1176, cysteine 1210, and cysteine 1213 each coordinate Zn(2+). An RING-type; atypical zinc finger spans residues cysteine 1108 to glutamate 1214. Glycyl lysine isopeptide (Lys-Gly) (interchain with G-Cter in ubiquitin) cross-links involve residues lysine 1496, lysine 1599, and lysine 1689. Serine 1694 is subject to Phosphoserine. Position 1697 is a phosphotyrosine (tyrosine 1697).

Belongs to the E3 ubiquitin-protein ligase UBR1-like family. As to quaternary structure, interacts with UBE2B; promotes the UBE2B-H2A interaction and the ubiquitination of histone H2A by UBE2B and UBR2. Interacts with RECQL4. Interacts with Tex19.1 and Tex19.2; does not lead to Tex19.1 degradation and stabilizes it. Interacts with L1RE1. Interacts with CASP8. Interacts with ATXN3. Interacts with UBE2O. In terms of processing, dephosphorylated by DUSP22 at Ser-1694 and Tyr-1697, leading to subsequent ubiquitination and proteasomal degradation. Post-translationally, 'Lys-48'-linked ubiquitinated at Lys-94, Lys-779 and Lys-1599 following DUSP22-mediated dephosphorylation of Ser-1694 and Tyr-1697 which promotes UBR2 interaction with the SCF(FBW1A) E3 ubiquitin-protein ligase complex. As to expression, highly expressed in skeletal muscle. Also expressed in heart, kidney and testis. Expressed in acinar cells of the pancreas. In testes, expressed primarily in spermatocytes. Expressed in cerebellum.

Its subcellular location is the nucleus. It is found in the chromosome. It carries out the reaction S-ubiquitinyl-[E2 ubiquitin-conjugating enzyme]-L-cysteine + [acceptor protein]-L-lysine = [E2 ubiquitin-conjugating enzyme]-L-cysteine + N(6)-ubiquitinyl-[acceptor protein]-L-lysine.. The protein operates within protein modification; protein ubiquitination. Functionally, E3 ubiquitin-protein ligase which is a component of the N-end rule pathway. Recognizes and binds to proteins bearing specific N-terminal residues (N-degrons) that are destabilizing according to the N-end rule, leading to their ubiquitination and subsequent degradation. Recognizes both type-1 and type-2 N-degrons, containing positively charged amino acids (Arg, Lys and His) and bulky and hydrophobic amino acids, respectively. Does not ubiquitinate proteins that are acetylated at the N-terminus. In contrast, it strongly binds methylated N-degrons. Plays a critical role in chromatin inactivation and chromosome-wide transcriptional silencing during meiosis via ubiquitination of histone H2A. Binds leucine and is a negative regulator of the leucine-mTOR signaling pathway, thereby controlling cell growth. Required for spermatogenesis, promotes, with Tex19.1, SPO11-dependent recombination foci to accumulate and drive robust homologous chromosome synapsis. Polyubiquitinates LINE-1 retrotransposon encoded, LIRE1, which induces degradation, inhibiting LINE-1 retrotransposon mobilization. Catalyzes ubiquitination and degradation of the N-terminal part of NLRP1B following NLRP1B activation by pathogens and other damage-associated signals: ubiquitination promotes degradation of the N-terminal part and subsequent release of the cleaved C-terminal part of NLRP1B, which polymerizes and forms the NLRP1B inflammasome followed by host cell pyroptosis. Plays a role in T-cell receptor signaling by inducing 'Lys-63'-linked ubiquitination of lymphocyte cell-specific kinase LCK. This activity is regulated by DUSP22, which induces 'Lys-48'-linked ubiquitination of UBR2, leading to its proteasomal degradation by SCF E3 ubiquitin-protein ligase complex. The chain is E3 ubiquitin-protein ligase UBR2 from Mus musculus (Mouse).